The primary structure comprises 469 residues: Trigger factor (469 aa).

Residues Gly165–Leu250 enclose the PPIase FKBP-type domain. Basic and acidic residues predominate over residues Asp444–Ser460. The disordered stretch occupies residues Asp444–Ser469.

The protein belongs to the FKBP-type PPIase family. Tig subfamily.

The protein resides in the cytoplasm. The enzyme catalyses [protein]-peptidylproline (omega=180) = [protein]-peptidylproline (omega=0). In terms of biological role, involved in protein export. Acts as a chaperone by maintaining the newly synthesized protein in an open conformation. Functions as a peptidyl-prolyl cis-trans isomerase. The polypeptide is Trigger factor (Bartonella henselae (strain ATCC 49882 / DSM 28221 / CCUG 30454 / Houston 1) (Rochalimaea henselae)).